The following is a 212-amino-acid chain: uncharacterized protein (212 aa).

A signal peptide spans 1–18; it reads MQLTQVLAVAILAAGVSA. The segment at 108-180 is disordered; the sequence is VSHNRVNAKQ…KDYGHKDYGH (73 aa). A compositionally biased stretch (basic and acidic residues) spans 117–180; that stretch reads QRRDDKKDYG…KDYGHKDYGH (64 aa). The segment at 120–210 is 15 X 5 AA tandem repeats of K-D-Y-G-H; the sequence is DDKKDYGKND…KDYGYKGYDD (91 aa). The stretch at 123-127 is repeat 1; that stretch reads KDYGK. The 2; truncated repeat unit spans residues 128-132; sequence NDYGK. Repeat copies occupy residues 133 to 137, 138 to 142, and 143 to 147. A 6; truncated repeat occupies 148-152; the sequence is KEYDP. 5 consecutive repeat copies span residues 166 to 170, 171 to 175, 176 to 180, 181 to 185, and 186 to 190. Residues 191–195 form a 12; truncated repeat; that stretch reads DDYGY. One copy of the 13; truncated repeat lies at 196 to 200; sequence KGYDD. The stretch at 201-205 is one 14; truncated repeat; sequence KDYGY. The stretch at 206–210 is one 15; truncated repeat; the sequence is KGYDD.

The protein localises to the secreted. This is an uncharacterized protein from Arthroderma benhamiae (strain ATCC MYA-4681 / CBS 112371) (Trichophyton mentagrophytes).